Consider the following 159-residue polypeptide: uncharacterized protein (159 aa).

The tract at residues 9–36 is disordered; it reads VTSGNKEKKKKRSSAGLTGHAPPAADSS.

This is an uncharacterized protein from Caenorhabditis elegans.